A 185-amino-acid chain; its full sequence is uncharacterized protein (185 aa).

A signal peptide spans 1-29 (MKNQEIIEVKSKMFLRIWAFVGSAGMGLA). The N-palmitoyl cysteine moiety is linked to residue cysteine 30. Cysteine 30 carries S-diacylglycerol cysteine lipidation. The chain crosses the membrane as a helical span at residues 45 to 67 (YLLAIPAGFLFTLFCLYLFIIFF).

It to B.subtilis YfjE.

It is found in the cell membrane. This is an uncharacterized protein from Bacillus subtilis (strain 168).